The chain runs to 173 residues: Small ribosomal subunit protein uS4c (173 aa).

In terms of domain architecture, S4 RNA-binding spans Ser-94–Lys-155.

This sequence belongs to the universal ribosomal protein uS4 family. Part of the 30S ribosomal subunit. Contacts protein S5. The interaction surface between S4 and S5 is involved in control of translational fidelity.

The protein resides in the plastid. In terms of biological role, one of the primary rRNA binding proteins, it binds directly to 16S rRNA where it nucleates assembly of the body of the 30S subunit. Its function is as follows. With S5 and S12 plays an important role in translational accuracy. This is Small ribosomal subunit protein uS4c (rps4) from Helicosporidium sp. subsp. Simulium jonesii (Green alga).